The chain runs to 240 residues: UDP-2,3-diacylglucosamine hydrolase (240 aa).

5 residues coordinate Mn(2+): Asp-7, His-9, Asp-40, Asn-78, and His-113. Residue 78 to 79 (NR) coordinates substrate. 4 residues coordinate substrate: Asp-121, Ser-159, Lys-166, and His-194. The Mn(2+) site is built by His-194 and His-196.

Belongs to the LpxH family. Mn(2+) serves as cofactor.

It is found in the cell inner membrane. The enzyme catalyses UDP-2-N,3-O-bis[(3R)-3-hydroxytetradecanoyl]-alpha-D-glucosamine + H2O = 2-N,3-O-bis[(3R)-3-hydroxytetradecanoyl]-alpha-D-glucosaminyl 1-phosphate + UMP + 2 H(+). Its pathway is glycolipid biosynthesis; lipid IV(A) biosynthesis; lipid IV(A) from (3R)-3-hydroxytetradecanoyl-[acyl-carrier-protein] and UDP-N-acetyl-alpha-D-glucosamine: step 4/6. In terms of biological role, hydrolyzes the pyrophosphate bond of UDP-2,3-diacylglucosamine to yield 2,3-diacylglucosamine 1-phosphate (lipid X) and UMP by catalyzing the attack of water at the alpha-P atom. Involved in the biosynthesis of lipid A, a phosphorylated glycolipid that anchors the lipopolysaccharide to the outer membrane of the cell. This is UDP-2,3-diacylglucosamine hydrolase from Pseudomonas putida (strain ATCC 47054 / DSM 6125 / CFBP 8728 / NCIMB 11950 / KT2440).